The primary structure comprises 732 residues: E3 ubiquitin-protein ligase DCST1 (732 aa).

Residues 1–46 (MAFLSSTLHSLGIFEKISRIKEVLKNRLLDLTKRRDQAREQQRKRP) lie on the Cytoplasmic side of the membrane. A helical transmembrane segment spans residues 47-67 (HTIIQGLLLWSLPVSWIRFLW). The Extracellular segment spans residues 68 to 76 (RQPGEFPVT). Residues 77 to 97 (AFLLGAGTGGLLAIGLFQLLV) form a helical membrane-spanning segment. Residues 98–107 (NPMNIYEEQK) lie on the Cytoplasmic side of the membrane. Residues 108-128 (VVALYCLASLGAIGWGTSPHI) form a helical membrane-spanning segment. The Extracellular portion of the chain corresponds to 129 to 394 (RCASLLLVPK…VRDYVRQQET (266 aa)). Residues Asn-184, Asn-217, Asn-346, and Asn-374 are each glycosylated (N-linked (GlcNAc...) asparagine). The helical transmembrane segment at 395–415 (YLQWAMGLLHVLLSCTFLLVF) threads the bilayer. Topologically, residues 416-489 (HSAFSYMDHY…RYVIRELLET (74 aa)) are cytoplasmic. A helical membrane pass occupies residues 490 to 510 (LPIVLLLLVLCAIDWALYSVF). At 511–576 (DTIRQHSFVQ…PQPISLNARD (66 aa)) the chain is on the extracellular side. A glycan (N-linked (GlcNAc...) asparagine) is linked at Asn-551. A helical membrane pass occupies residues 577 to 597 (YFKASLPTLLLVCLCLAQAFG). The Cytoplasmic portion of the chain corresponds to 598 to 732 (YRLRRVIAAF…DSNDDAVYGD (135 aa)). Residues 672–711 (CVVCQAMETPDSYVCPTPDCKALYCRSCWDDMQRLCPVCT) form an RING-type; degenerate zinc finger.

In terms of assembly, interacts with STAT2; the interaction results in STAT2 'Lys-48'-linked ubiquitination leading to its proteasomal degradation. Interacts with DCST2. Expressed in testis.

The protein resides in the cell membrane. It is found in the cytoplasmic vesicle. Its subcellular location is the secretory vesicle. The protein localises to the acrosome membrane. It carries out the reaction S-ubiquitinyl-[E2 ubiquitin-conjugating enzyme]-L-cysteine + [acceptor protein]-L-lysine = [E2 ubiquitin-conjugating enzyme]-L-cysteine + N(6)-ubiquitinyl-[acceptor protein]-L-lysine.. Its pathway is protein modification; protein ubiquitination. Its function is as follows. E3 ubiquitin-protein ligase which mediates 'Lys-48'-linked ubiquitination of STAT2 and induces its proteasomal degradation thereby negatively regulating type-I-interferon signaling. Essential sperm cell-surface protein required for sperm-egg fusion and fertilization. The chain is E3 ubiquitin-protein ligase DCST1 (Dcst1) from Mus musculus (Mouse).